The following is a 70-amino-acid chain: MKVKEIREMSTEEIKAKVAELKEELFNLRFQLAVNNLENTARIREVRRAIAQCKTVIRERELKAQGEVKA.

It belongs to the universal ribosomal protein uL29 family.

This is Large ribosomal subunit protein uL29 from Symbiobacterium thermophilum (strain DSM 24528 / JCM 14929 / IAM 14863 / T).